A 981-amino-acid chain; its full sequence is Polyhomeotic-like protein 3 (981 aa).

The segment covering 1 to 28 has biased composition (low complexity); sequence MDSEPSSGTSVSTTASSTTTTTITTSSS. Disordered regions lie at residues 1-33, 102-127, 224-280, and 307-407; these read MDSE…MQQP, LSSG…TSIL, LSSS…TAVT, and QIPL…SQSP. Over residues 224-255 the composition is skewed to polar residues; it reads LSSSQNGSPKSAGQTQSLTICHNKTTVTSSKI. 4 positions are modified to phosphoserine: Ser231, Ser261, Ser269, and Ser312. Positions 256–266 are enriched in basic and acidic residues; that stretch reads SQRDPSPESKK. Over residues 321–340 the composition is skewed to low complexity; it reads QLLLQQQQQQIQPITLQSPS. The segment covering 360–373 has biased composition (polar residues); the sequence is APSNAQPQHCSPVQ. A compositionally biased stretch (low complexity) spans 381–395; the sequence is VSPNQAQSAQQSVVV. Phosphothreonine is present on residues Thr607 and Thr612. Ser614 is modified (phosphoserine). Residues 650–690 are disordered; that stretch reads KSPSDPTHASAPAPPLLIPAASTRSSSTSLASSTPSLENKP. Residues 667–686 show a composition bias toward low complexity; sequence IPAASTRSSSTSLASSTPSL. Residues Lys689 and Lys730 each participate in a glycyl lysine isopeptide (Lys-Gly) (interchain with G-Cter in SUMO2) cross-link. Residues 689-718 carry the HD1 motif; that stretch reads KPPQAIVKPQILTHVIEGFVIQEGLEPFPV. Phosphoserine occurs at positions 759 and 760. The FCS-type zinc-finger motif lies at 774-808; it reads EEMDSELLKCEFCGKMGYPNEFLRSKRFCTMSCAK. Zn(2+) is bound by residues Cys783, Cys786, Cys802, and Cys806. Residue Lys808 forms a Glycyl lysine isopeptide (Lys-Gly) (interchain with G-Cter in SUMO2) linkage. 2 disordered regions span residues 825 to 844 and 863 to 888; these read RKPD…GPEG and EDVA…ERER. The 65-residue stretch at 917 to 981 folds into the SAM domain; sequence WTVDDVWAFI…CARINSLKDS (65 aa).

In terms of assembly, component of a PRC1-like complex. In terms of tissue distribution, ubiquitous expression.

It is found in the nucleus. In terms of biological role, component of a Polycomb group (PcG) multiprotein PRC1-like complex, a complex class required to maintain the transcriptionally repressive state of many genes, including Hox genes, throughout development. PcG PRC1 complex acts via chromatin remodeling and modification of histones; it mediates monoubiquitination of histone H2A 'Lys-119', rendering chromatin heritably changed in its expressibility. This Mus musculus (Mouse) protein is Polyhomeotic-like protein 3 (Phc3).